We begin with the raw amino-acid sequence, 82 residues long: Turripeptide Gsg9.1 (82 aa).

The N-terminal stretch at 1–23 is a signal peptide; the sequence is MMAKLMITVMTVFFLSLQQGADG. Positions 24-46 are excised as a propeptide; the sequence is LFERWRKNQMAASRIMGNLITAR. 4-hydroxyproline is present on residues P49 and P50. Disulfide bonds link C53–C68, C58–C72, and C64–C79. E60 and E63 each carry 4-carboxyglutamate.

The protein belongs to the Pg turripeptide superfamily. As to expression, expressed by the venom duct.

It localises to the secreted. The sequence is that of Turripeptide Gsg9.1 from Gemmula sogodensis (Gem-turris).